The chain runs to 362 residues: 3-dehydroquinate synthase (362 aa).

NAD(+) contacts are provided by residues 70-75, 104-108, 128-129, Lys-141, Lys-150, and 168-171; these read DGEKYK, GVIGD, TT, and TLNT. Residues Glu-183, His-246, and His-263 each contribute to the Zn(2+) site.

The protein belongs to the sugar phosphate cyclases superfamily. Dehydroquinate synthase family. Requires Co(2+) as cofactor. The cofactor is Zn(2+). It depends on NAD(+) as a cofactor.

It is found in the cytoplasm. The enzyme catalyses 7-phospho-2-dehydro-3-deoxy-D-arabino-heptonate = 3-dehydroquinate + phosphate. Its pathway is metabolic intermediate biosynthesis; chorismate biosynthesis; chorismate from D-erythrose 4-phosphate and phosphoenolpyruvate: step 2/7. In terms of biological role, catalyzes the conversion of 3-deoxy-D-arabino-heptulosonate 7-phosphate (DAHP) to dehydroquinate (DHQ). The polypeptide is 3-dehydroquinate synthase (Haemophilus influenzae (strain 86-028NP)).